The primary structure comprises 369 residues: UDP-N-acetylglucosamine--N-acetylmuramyl-(pentapeptide) pyrophosphoryl-undecaprenol N-acetylglucosamine transferase (369 aa).

UDP-N-acetyl-alpha-D-glucosamine is bound by residues 16-18 (TGG), Asn-130, Arg-171, Ser-196, and Gln-297.

It belongs to the glycosyltransferase 28 family. MurG subfamily.

Its subcellular location is the cell inner membrane. The catalysed reaction is di-trans,octa-cis-undecaprenyl diphospho-N-acetyl-alpha-D-muramoyl-L-alanyl-D-glutamyl-meso-2,6-diaminopimeloyl-D-alanyl-D-alanine + UDP-N-acetyl-alpha-D-glucosamine = di-trans,octa-cis-undecaprenyl diphospho-[N-acetyl-alpha-D-glucosaminyl-(1-&gt;4)]-N-acetyl-alpha-D-muramoyl-L-alanyl-D-glutamyl-meso-2,6-diaminopimeloyl-D-alanyl-D-alanine + UDP + H(+). It participates in cell wall biogenesis; peptidoglycan biosynthesis. In terms of biological role, cell wall formation. Catalyzes the transfer of a GlcNAc subunit on undecaprenyl-pyrophosphoryl-MurNAc-pentapeptide (lipid intermediate I) to form undecaprenyl-pyrophosphoryl-MurNAc-(pentapeptide)GlcNAc (lipid intermediate II). The sequence is that of UDP-N-acetylglucosamine--N-acetylmuramyl-(pentapeptide) pyrophosphoryl-undecaprenol N-acetylglucosamine transferase from Desulfotalea psychrophila (strain LSv54 / DSM 12343).